Here is an 883-residue protein sequence, read N- to C-terminus: DNA mismatch repair protein MutS (883 aa).

633-640 (GPNMGGKS) serves as a coordination point for ATP.

Belongs to the DNA mismatch repair MutS family.

This protein is involved in the repair of mismatches in DNA. It is possible that it carries out the mismatch recognition step. This protein has a weak ATPase activity. This chain is DNA mismatch repair protein MutS, found in Bordetella parapertussis (strain 12822 / ATCC BAA-587 / NCTC 13253).